A 434-amino-acid polypeptide reads, in one-letter code: N-lysine methyltransferase SMYD2-B (434 aa).

In terms of domain architecture, SET spans 8–242 (PGIEQFASPG…PGQEIYTSYI (235 aa)). An S-adenosyl-L-methionine-binding site is contributed by 18 to 20 (KGR). Residues Cys-53, Cys-56, Cys-66, Cys-69, Cys-75, Cys-79, His-87, and Cys-91 each contribute to the Zn(2+) site. The segment at 53 to 91 (CEQCFTRKKGLAKCGKCKKAFYCNANCQKKNWPMHKLEC) adopts an MYND-type zinc-finger fold. Residues His-138, 207–208 (NH), and 259–261 (YYF) contribute to the S-adenosyl-L-methionine site.

Belongs to the class V-like SAM-binding methyltransferase superfamily.

It localises to the cytoplasm. It is found in the cytosol. The protein resides in the nucleus. The catalysed reaction is L-lysyl(4)-[histone H3] + 3 S-adenosyl-L-methionine = N(6),N(6),N(6)-trimethyl-L-lysyl(4)-[histone H3] + 3 S-adenosyl-L-homocysteine + 3 H(+). The enzyme catalyses L-lysyl-[protein] + S-adenosyl-L-methionine = N(6)-methyl-L-lysyl-[protein] + S-adenosyl-L-homocysteine + H(+). Functionally, protein-lysine N-methyltransferase that methylates both histones and non-histone proteins, including p53/TP53 and RB1. Specifically trimethylates histone H3 'Lys-4' (H3K4me3) in vivo. The activity requires interaction with HSP90alpha. Shows even higher methyltransferase activity on p53/TP53. Monomethylates 'Lys-370' of p53/TP53, leading to decreased DNA-binding activity and subsequent transcriptional regulation activity of p53/TP53. Monomethylates RB1 at 'Lys-860'. This Danio rerio (Zebrafish) protein is N-lysine methyltransferase SMYD2-B (smyd2b).